The sequence spans 340 residues: Beta-ketoacyl-[acyl-carrier-protein] synthase III (340 aa).

Catalysis depends on residues Cys119 and His260. Positions 261–265 are ACP-binding; the sequence is QANYR. Asn290 is a catalytic residue.

It belongs to the thiolase-like superfamily. FabH family. In terms of assembly, homodimer.

It is found in the cytoplasm. The catalysed reaction is malonyl-[ACP] + acetyl-CoA + H(+) = 3-oxobutanoyl-[ACP] + CO2 + CoA. It participates in lipid metabolism; fatty acid biosynthesis. In terms of biological role, catalyzes the condensation reaction of fatty acid synthesis by the addition to an acyl acceptor of two carbons from malonyl-ACP. Catalyzes the first condensation reaction which initiates fatty acid synthesis and may therefore play a role in governing the total rate of fatty acid production. Possesses both acetoacetyl-ACP synthase and acetyl transacylase activities. Its substrate specificity determines the biosynthesis of branched-chain and/or straight-chain of fatty acids. This is Beta-ketoacyl-[acyl-carrier-protein] synthase III from Sulfurovum sp. (strain NBC37-1).